Reading from the N-terminus, the 190-residue chain is Cytidylate kinase (190 aa).

Glycine 7 to threonine 15 serves as a coordination point for ATP.

This sequence belongs to the cytidylate kinase family. Type 2 subfamily.

Its subcellular location is the cytoplasm. It catalyses the reaction CMP + ATP = CDP + ADP. The catalysed reaction is dCMP + ATP = dCDP + ADP. The chain is Cytidylate kinase from Thermoplasma volcanium (strain ATCC 51530 / DSM 4299 / JCM 9571 / NBRC 15438 / GSS1).